The primary structure comprises 840 residues: Leucine--tRNA ligase (840 aa).

A 'HIGH' region motif is present at residues 44-55 (PYPSANGLHVGH). The 'KMSKS' region motif lies at 617–621 (KMSKS). Lysine 620 serves as a coordination point for ATP.

The protein belongs to the class-I aminoacyl-tRNA synthetase family.

The protein resides in the cytoplasm. The enzyme catalyses tRNA(Leu) + L-leucine + ATP = L-leucyl-tRNA(Leu) + AMP + diphosphate. This is Leucine--tRNA ligase from Borreliella afzelii (strain PKo) (Borrelia afzelii).